The following is a 252-amino-acid chain: Triosephosphate isomerase (252 aa).

Residue 9–11 (NWK) coordinates substrate. H96 acts as the Electrophile in catalysis. Residue E166 is the Proton acceptor of the active site. Residues G172, S212, and 233 to 234 (GG) each bind substrate.

The protein belongs to the triosephosphate isomerase family. Homodimer.

The protein localises to the cytoplasm. It carries out the reaction D-glyceraldehyde 3-phosphate = dihydroxyacetone phosphate. Its pathway is carbohydrate biosynthesis; gluconeogenesis. It functions in the pathway carbohydrate degradation; glycolysis; D-glyceraldehyde 3-phosphate from glycerone phosphate: step 1/1. Involved in the gluconeogenesis. Catalyzes stereospecifically the conversion of dihydroxyacetone phosphate (DHAP) to D-glyceraldehyde-3-phosphate (G3P). In Chlorobium chlorochromatii (strain CaD3), this protein is Triosephosphate isomerase.